A 119-amino-acid chain; its full sequence is Ribonuclease P protein component (119 aa).

Belongs to the RnpA family. As to quaternary structure, consists of a catalytic RNA component (M1 or rnpB) and a protein subunit.

It carries out the reaction Endonucleolytic cleavage of RNA, removing 5'-extranucleotides from tRNA precursor.. In terms of biological role, RNaseP catalyzes the removal of the 5'-leader sequence from pre-tRNA to produce the mature 5'-terminus. It can also cleave other RNA substrates such as 4.5S RNA. The protein component plays an auxiliary but essential role in vivo by binding to the 5'-leader sequence and broadening the substrate specificity of the ribozyme. This chain is Ribonuclease P protein component, found in Bifidobacterium longum (strain DJO10A).